The following is a 193-amino-acid chain: MTGLEIWLLAIGLAMDCFAVSIASGIILKRTQWRPMLVMALAFGLFQALMPFIGWMFAKTFSHLIESVDHWIAFAILAFLGGRMILESFKDEDCRQTFNPASPKVVFTMAIATSIDALAIGISFALLGINNYTEILSPILIIGFVSFVMSLIGLYFGIKCGCGCARKLKAELWGGIILVAIGLKILIEHLFLQ.

The next 6 helical transmembrane spans lie at 8 to 28 (LLAI…GIIL), 37 to 57 (LVMA…GWMF), 61 to 81 (FSHL…AFLG), 109 to 129 (MAIA…LLGI), 138 to 158 (PILI…YFGI), and 172 to 192 (LWGG…HLFL).

The protein belongs to the MntP (TC 9.B.29) family.

It localises to the cell inner membrane. Functionally, probably functions as a manganese efflux pump. The polypeptide is Putative manganese efflux pump MntP (Bacteroides thetaiotaomicron (strain ATCC 29148 / DSM 2079 / JCM 5827 / CCUG 10774 / NCTC 10582 / VPI-5482 / E50)).